A 577-amino-acid chain; its full sequence is Proline--tRNA ligase (577 aa).

This sequence belongs to the class-II aminoacyl-tRNA synthetase family. ProS type 1 subfamily. In terms of assembly, homodimer.

The protein resides in the cytoplasm. It carries out the reaction tRNA(Pro) + L-proline + ATP = L-prolyl-tRNA(Pro) + AMP + diphosphate. Functionally, catalyzes the attachment of proline to tRNA(Pro) in a two-step reaction: proline is first activated by ATP to form Pro-AMP and then transferred to the acceptor end of tRNA(Pro). As ProRS can inadvertently accommodate and process non-cognate amino acids such as alanine and cysteine, to avoid such errors it has two additional distinct editing activities against alanine. One activity is designated as 'pretransfer' editing and involves the tRNA(Pro)-independent hydrolysis of activated Ala-AMP. The other activity is designated 'posttransfer' editing and involves deacylation of mischarged Ala-tRNA(Pro). The misacylated Cys-tRNA(Pro) is not edited by ProRS. This Chlamydia felis (strain Fe/C-56) (Chlamydophila felis) protein is Proline--tRNA ligase.